We begin with the raw amino-acid sequence, 253 residues long: MLKIRVIPCLDVADGRVVKGVNFVDLVDAGDPVESAKAYDAAGADELCFLDIHATNENRGTMYDLATRTAEQCFMPLTIGGGVRTTEDVRNLLLAGADKVSFNSAAVADPDVIARAADKFGSQCIVCAIDAKTVAPGRWEIFTHGGRKPTGIDAVEFAKTVVEKGAGEILLTSMDRDGTKQGFNIALTRAISDAVSVPVIASGGVGTLDHLVEGVTEGGASAVLAASIFHFGEFTIREAKEHMAEAGIPVRLS.

Residues Asp11 and Asp130 contribute to the active site.

This sequence belongs to the HisA/HisF family. Heterodimer of HisH and HisF.

The protein localises to the cytoplasm. It catalyses the reaction 5-[(5-phospho-1-deoxy-D-ribulos-1-ylimino)methylamino]-1-(5-phospho-beta-D-ribosyl)imidazole-4-carboxamide + L-glutamine = D-erythro-1-(imidazol-4-yl)glycerol 3-phosphate + 5-amino-1-(5-phospho-beta-D-ribosyl)imidazole-4-carboxamide + L-glutamate + H(+). Its pathway is amino-acid biosynthesis; L-histidine biosynthesis; L-histidine from 5-phospho-alpha-D-ribose 1-diphosphate: step 5/9. In terms of biological role, IGPS catalyzes the conversion of PRFAR and glutamine to IGP, AICAR and glutamate. The HisF subunit catalyzes the cyclization activity that produces IGP and AICAR from PRFAR using the ammonia provided by the HisH subunit. In Dinoroseobacter shibae (strain DSM 16493 / NCIMB 14021 / DFL 12), this protein is Imidazole glycerol phosphate synthase subunit HisF.